A 371-amino-acid chain; its full sequence is Photosynthetic reaction center cytochrome c subunit (371 aa).

Heme is bound by residues methionine 114, cysteine 127, cysteine 130, histidine 131, methionine 153, histidine 167, cysteine 178, cysteine 181, histidine 182, methionine 267, cysteine 278, cysteine 281, histidine 282, cysteine 339, cysteine 342, and histidine 343.

As to quaternary structure, component of the photosynthetic reaction center composed of protein subunits L (PufL), M (PufM), H (PuhA) and cytochrome C (PufC). The reaction center interacts with light-harvesting antenna complex LH1. Binds 4 heme groups per subunit.

It is found in the cellular chromatophore membrane. Functionally, the reaction center of purple bacteria contains a tightly bound cytochrome molecule which re-reduces the photo oxidized primary electron donor. This is Photosynthetic reaction center cytochrome c subunit (pufC) from Roseobacter denitrificans (strain ATCC 33942 / OCh 114) (Erythrobacter sp. (strain OCh 114)).